Reading from the N-terminus, the 563-residue chain is Probable CoA ligase CCL11 (563 aa).

ATP-binding positions include 195 to 203 (TSGTTSSPK), 328 to 333 (HGYGMT), D426, 438 to 441 (IKDR), and K534. An SBD1 region spans residues 263–328 (DGEIIFNLIR…TESLGFVISH (66 aa)). Residues 329 to 405 (GYGMTEMLGV…LKGSSIMLGY (77 aa)) are SBD2.

It belongs to the ATP-dependent AMP-binding enzyme family.

The protein localises to the cytoplasm. Its subcellular location is the cytosol. The protein is Probable CoA ligase CCL11 of Humulus lupulus (European hop).